Here is a 245-residue protein sequence, read N- to C-terminus: MSNDMIFGIHAVKAVLATDPVRLIEVFVLKDRQDDRLMPLLTELKDLGITIQHAGRKALDDKAKGASHQGIIARVKPAKQLNEHDLDTILEGSENPLLLILDGVTDPHNLGACLRNADAAGAVAVIIPKDRAAQLTATASKVACGAAEVMPLVRVTNLARTMRALQDKGVWIVGTAGEATHDIYHSKLTGPLAIVMGAEGEGMRRLTRETCDDLIKIPMAGSVSSLNVSVATGICLFEAVRQRQI.

S-adenosyl-L-methionine contacts are provided by Gly197, Ile217, and Leu226.

This sequence belongs to the class IV-like SAM-binding methyltransferase superfamily. RNA methyltransferase TrmH family. RlmB subfamily.

It is found in the cytoplasm. The catalysed reaction is guanosine(2251) in 23S rRNA + S-adenosyl-L-methionine = 2'-O-methylguanosine(2251) in 23S rRNA + S-adenosyl-L-homocysteine + H(+). Functionally, specifically methylates the ribose of guanosine 2251 in 23S rRNA. The polypeptide is 23S rRNA (guanosine-2'-O-)-methyltransferase RlmB (Photobacterium profundum (strain SS9)).